We begin with the raw amino-acid sequence, 87 residues long: Small ribosomal subunit protein bS20 (87 aa).

Residues 1–25 (MANTAQARKRARQSVQRNKHNSSLR) form a disordered region. The segment covering 7 to 22 (ARKRARQSVQRNKHNS) has biased composition (basic residues).

It belongs to the bacterial ribosomal protein bS20 family.

Its function is as follows. Binds directly to 16S ribosomal RNA. This is Small ribosomal subunit protein bS20 from Bordetella bronchiseptica (strain ATCC BAA-588 / NCTC 13252 / RB50) (Alcaligenes bronchisepticus).